The chain runs to 564 residues: MAELDLMAPGPLPRATAQPPAPLSPDSGSPSPDSGSASPVEEEDVGSSEKLGRETEEQDSDPAEQGDPAGEGKEVLCDFCLDDTRRVKAVKSCLTCMVNYCEEHLQPHQVNIKLQSHLLTEPVKDHNWRYCPAHHSPLSAFCCPDQQCICQDCCQEHSGHTIVSLDAARRDKEAELQCTQLDLERKLKLNENAISRLQANQKSVLVSVSEVKAVAEMQFGELLAAVRKAQANVMLFLEEKEQAALSQANGIKAHLEYRSAEMEKSKQELERMAAISNTVQFLEEYCKFKNTEDITFPSVYVGLKDKLSGIRKVITESTVHLIQLLENYKKKLQEFSKEEEYDIRTQVSAVVQRKYWTSKPEPSTREQFLQYAYDITFDPDTAHKYLRLQEENRKVTNTTPWEHPYPDLPSRFLHWRQVLSQQSLYLHRYYFEVEIFGAGTYVGLTCKGIDRKGEERNSCISGNNFSWSLQWNGKEFTAWYSDMETPLKAGPFRRLGVYIDFPGGILSFYGVEYDTMTLVHKFACKFSEPVYAAFWLSKKENAIRIVDLGEEPEKPAPSLVGTAP.

The tract at residues Met1 to Gly70 is disordered. The span at Ser24–Pro39 shows a compositional bias: low complexity. 2 consecutive B box-type zinc fingers follow at residues Gly72 to Pro122 and His126 to Leu165. Ser116 bears the Phosphoserine mark. Zn(2+) contacts are provided by Cys131, His134, Cys153, and His157. Coiled coils occupy residues Leu165 to Ser203, Ala243 to Ala274, and His320 to Glu340. A Phosphoserine modification is found at Ser203. The region spanning Tyr355–Glu553 is the B30.2/SPRY domain.

It belongs to the TRIM/RBCC family. Homodimerizes via its coiled-coil domain. Heterodimerizes with MID1, TRIM24 and PML. Interacts with Galectin-3/LGALS3 in a ULK1-dependent manner; this interaction mediates autophagy of damage endomembranes. Interacts with BECN1. Interacts with ATG16L1. Interacts with p62/SQSTM and LC3B/MAP1LC3B. In terms of processing, phosphorylated by ULK1. Post-translationally, auto-ubiquitinates via its B-Boxes.

It is found in the cytoplasm. It carries out the reaction S-ubiquitinyl-[E2 ubiquitin-conjugating enzyme]-L-cysteine + [acceptor protein]-L-lysine = [E2 ubiquitin-conjugating enzyme]-L-cysteine + N(6)-ubiquitinyl-[acceptor protein]-L-lysine.. Functionally, E3 ubiquitin ligase that plays an essential role in the organization of autophagic response and ubiquitination upon lysosomal and phagosomal damages. Plays a role in the stress-induced biogenesis and degradation of protein aggresomes by regulating the p62-KEAP1-NRF2 signaling and particularly by modulating the ubiquitination levels and thus stability of NRF2. Acts as a scaffold protein and facilitates autophagic degradation of protein aggregates by interacting with p62/SQSTM, ATG16L1 and LC3B/MAP1LC3B. In turn, protects the cell against oxidative stress-induced cell death as a consequence of endomembrane damage. In Pongo abelii (Sumatran orangutan), this protein is E3 ubiquitin-protein ligase TRIM16 (TRIM16).